We begin with the raw amino-acid sequence, 216 residues long: PRA1 family protein B6 (216 aa).

Ala-2 is subject to N-acetylalanine. Transmembrane regions (helical) follow at residues Leu-83–Ala-103, Leu-105–Gly-125, Leu-135–Leu-155, Leu-159–Phe-179, and Ile-186–Ile-206.

The protein belongs to the PRA1 family. As to quaternary structure, interacts with PRA1B1, PRA1B2, PRA1B3, PRA1B4, PRA1B5 and PRA1E. As to expression, expressed in hypocotyls, roots, lateral roots, lateral root caps, columella cells, leaves and stomata.

The protein localises to the endoplasmic reticulum membrane. Functionally, may be involved in both secretory and endocytic intracellular trafficking in the endosomal/prevacuolar compartments. In Arabidopsis thaliana (Mouse-ear cress), this protein is PRA1 family protein B6 (PRA1B6).